The chain runs to 224 residues: 7-cyano-7-deazaguanine synthase (224 aa).

10–20 (LSGGLDSATVV) provides a ligand contact to ATP. Residues Cys189, Cys199, Cys202, and Cys205 each coordinate Zn(2+).

It belongs to the QueC family. Requires Zn(2+) as cofactor.

The enzyme catalyses 7-carboxy-7-deazaguanine + NH4(+) + ATP = 7-cyano-7-deazaguanine + ADP + phosphate + H2O + H(+). Its pathway is purine metabolism; 7-cyano-7-deazaguanine biosynthesis. In terms of biological role, catalyzes the ATP-dependent conversion of 7-carboxy-7-deazaguanine (CDG) to 7-cyano-7-deazaguanine (preQ(0)). This Pseudomonas paraeruginosa (strain DSM 24068 / PA7) (Pseudomonas aeruginosa (strain PA7)) protein is 7-cyano-7-deazaguanine synthase.